The primary structure comprises 322 residues: Quinolinate synthase (322 aa).

Residues histidine 36 and serine 53 each coordinate iminosuccinate. Cysteine 98 lines the [4Fe-4S] cluster pocket. Residues 124-126 (YIN) and serine 141 contribute to the iminosuccinate site. Cysteine 184 provides a ligand contact to [4Fe-4S] cluster. Residues 210-212 (HPE) and threonine 227 contribute to the iminosuccinate site. Cysteine 278 provides a ligand contact to [4Fe-4S] cluster.

The protein belongs to the quinolinate synthase family. Type 2 subfamily. Requires [4Fe-4S] cluster as cofactor.

It localises to the cytoplasm. The enzyme catalyses iminosuccinate + dihydroxyacetone phosphate = quinolinate + phosphate + 2 H2O + H(+). It functions in the pathway cofactor biosynthesis; NAD(+) biosynthesis; quinolinate from iminoaspartate: step 1/1. Its function is as follows. Catalyzes the condensation of iminoaspartate with dihydroxyacetone phosphate to form quinolinate. This chain is Quinolinate synthase, found in Chloroherpeton thalassium (strain ATCC 35110 / GB-78).